We begin with the raw amino-acid sequence, 480 residues long: Glycogen synthase (480 aa).

Lysine 15 lines the ADP-alpha-D-glucose pocket.

Belongs to the glycosyltransferase 1 family. Bacterial/plant glycogen synthase subfamily.

The enzyme catalyses [(1-&gt;4)-alpha-D-glucosyl](n) + ADP-alpha-D-glucose = [(1-&gt;4)-alpha-D-glucosyl](n+1) + ADP + H(+). It participates in glycan biosynthesis; glycogen biosynthesis. Synthesizes alpha-1,4-glucan chains using ADP-glucose. The polypeptide is Glycogen synthase (Rhizobium rhizogenes (strain K84 / ATCC BAA-868) (Agrobacterium radiobacter)).